Reading from the N-terminus, the 323-residue chain is Olfactory receptor 1E2 (323 aa).

At 1 to 25 the chain is on the extracellular side; that stretch reads MMGQNQTSISDFLLLGLPIQPEQQN. A glycan (N-linked (GlcNAc...) asparagine) is linked at Asn-5. A helical transmembrane segment spans residues 26 to 49; sequence LCYALFLAMYLTTLLGNLLIIVLI. Residues 50–57 lie on the Cytoplasmic side of the membrane; it reads RLDSHLHT. Residues 58 to 79 form a helical membrane-spanning segment; the sequence is PVYLFLSNLSFSDLCFSSVTMP. Residues 80–100 are Extracellular-facing; sequence KLLQNMQNQDPSIPYADCLTQ. Cys-97 and Cys-198 form a disulfide bridge. Residues 101-120 form a helical membrane-spanning segment; sequence MYFFLYFSDLESFLLVAMAY. Residues 121–148 are Cytoplasmic-facing; it reads DRYVAICFPMHYTAICFLLHYTAIMSPM. The helical transmembrane segment at 149–167 threads the bilayer; sequence LCLSVVALSWVLTTFHAML. Residues 168–205 are Extracellular-facing; the sequence is HTLLMARLCFCADNVIPHFFCDMSALLKLACSDTRVNE. The helical transmembrane segment at 206-228 threads the bilayer; it reads WVIFIMGGLILVIPFLLILGSYA. Residues 229–245 are Cytoplasmic-facing; that stretch reads RIVSSILKVPSSKGICK. A helical transmembrane segment spans residues 246 to 269; that stretch reads AFSTCGSHLSVVSLFYGTVIGLYL. The Extracellular portion of the chain corresponds to 270 to 281; that stretch reads CPSANSSTLKDT. N-linked (GlcNAc...) asparagine glycosylation occurs at Asn-274. The chain crosses the membrane as a helical span at residues 282-301; the sequence is VMAMMYTVVTPMLTPFIYSL. At 302–323 the chain is on the cytoplasmic side; sequence RNRDMKGALERVICKRKNPFLL.

Belongs to the G-protein coupled receptor 1 family.

The protein resides in the cell membrane. Its function is as follows. Odorant receptor. The protein is Olfactory receptor 1E2 (OR1E2) of Homo sapiens (Human).